We begin with the raw amino-acid sequence, 252 residues long: Curing of [URE3] protein 1 (252 aa).

The protein resides in the nucleus. Functionally, involved in the curing of prion [URE3]. Nuclear localization of this protein may suggest a role in transcription regulation, so it might exert an effect on [URE3] through known prion-curing chaperones or BTN2. The sequence is that of Curing of [URE3] protein 1 (CUR1) from Saccharomyces cerevisiae (strain ATCC 204508 / S288c) (Baker's yeast).